A 139-amino-acid chain; its full sequence is Putative pre-16S rRNA nuclease (139 aa).

The protein belongs to the YqgF nuclease family.

The protein resides in the cytoplasm. Could be a nuclease involved in processing of the 5'-end of pre-16S rRNA. This Legionella pneumophila (strain Paris) protein is Putative pre-16S rRNA nuclease.